The chain runs to 480 residues: Cytochrome P450 monooxygenase ORF11 (480 aa).

Residues 9–29 (LLLLPHLSALTPKTGFLIGLA) traverse the membrane as a helical segment. 2 N-linked (GlcNAc...) asparagine glycosylation sites follow: Asn-265 and Asn-352. Cys-449 contacts heme.

The protein belongs to the cytochrome P450 family. Heme serves as cofactor.

It is found in the membrane. It participates in sesquiterpene biosynthesis. Functionally, cytochrome P450 monooxygenase; part of the gene cluster that mediates the biosynthesis of PR-toxin, a bicyclic sesquiterpene belonging to the eremophilane class and acting as a mycotoxin. The first step of the pathway is catalyzed by the aristolochene synthase which performs the cyclization of trans,trans-farnesyl diphosphate (FPP) to the bicyclic sesquiterpene aristolochene. Following the formation of aristolochene, the non-oxygenated aristolochene is converted to the trioxygenated intermediate eremofortin B, via 7-epi-neopetasone. This conversion appears to involve three enzymes, a hydroxysterol oxidase-like enzyme, the quinone-oxidase prx3 that forms the quinone-type-structure in the bicyclic nucleus of aristolochene with the C8-oxo group and the C-3 hydroxyl group, and the P450 monooxygenase ORF6 that introduces the epoxide at the double bond between carbons 1 and 2. No monoxy or dioxy-intermediates have been reported to be released to the broth, so these three early oxidative reactions may be coupled together. Eremofortin B is further oxidized by another P450 monooxygenase, that introduces a second epoxide between carbons 7 and 11 prior to acetylation to eremofortin A by the acetyltransferase ORF8. The second epoxidation may be performed by a second P450 monooxygenase. After the acetylation step, eremofortin A is converted to eremofortin C and then to PR-toxin. First the conversion of eremofortin A to eremofortin C proceeds by oxidation of the side chain of the molecule at C-12 and is catalyzed by the short-chain oxidoreductase prx1. The cytochrome P450 monooxygenase ORF6 is probably also involved in this step. The primary alcohol formed at C-12 is finally oxidized by the short-chain alcohol dehydrogenase prx4 that forms PR-toxin. This chain is Cytochrome P450 monooxygenase ORF11, found in Penicillium roqueforti (strain FM164).